Consider the following 122-residue polypeptide: Phosphoribosyl-ATP pyrophosphatase (122 aa).

The protein belongs to the PRA-PH family.

The protein resides in the cytoplasm. It carries out the reaction 1-(5-phospho-beta-D-ribosyl)-ATP + H2O = 1-(5-phospho-beta-D-ribosyl)-5'-AMP + diphosphate + H(+). It functions in the pathway amino-acid biosynthesis; L-histidine biosynthesis; L-histidine from 5-phospho-alpha-D-ribose 1-diphosphate: step 2/9. This Burkholderia mallei (strain NCTC 10247) protein is Phosphoribosyl-ATP pyrophosphatase.